The chain runs to 1142 residues: Ribonucleoside-diphosphate reductase large subunit (1142 aa).

Residues 1–33 (MANRPAASALAGARSPSERQEPREPEVAPPGGD) form a disordered region. Basic and acidic residues predominate over residues 16–26 (PSERQEPREPE). Residues 55–75 (AYRISDSSFVQCGSNCSMIID) carry the RIP homotypic interaction motif (RHIM) motif. Positions 118-322 (SGPSATTSVG…TDPGYPVPLE (205 aa)) are disordered. A compositionally biased stretch (polar residues) spans 119-132 (GPSATTSVGTQTSG). Positions 141–159 (TPEPQGPQAVPPPPPPPFP) are enriched in pro residues. The segment covering 164 to 179 (CCARRDARGGAEKDVG) has biased composition (basic and acidic residues). A compositionally biased stretch (acidic residues) spans 192–205 (SETEDSDSSDEDTG). A compositionally biased stretch (low complexity) spans 277–303 (GSATDPRASADSDSAAHAAAPQADVAP). Residues 294–400 (AAAPQADVAP…CLDLPPVPPN (107 aa)) are alpha-crystallin domain. Residues Thr-571, 586-587 (SC), Gly-617, 796-800 (NLCTE), and 973-977 (PTAAS) each bind substrate. Cys-587 and Cys-813 form a disulfide bridge. Asn-796 acts as the Proton acceptor in catalysis. The active-site Cysteine radical intermediate is Cys-798. Glu-800 serves as the catalytic Proton acceptor.

It belongs to the ribonucleoside diphosphate reductase large chain family. As to quaternary structure, heterotetramer composed of a homodimer of the large subunit (R1) and a homodimer of the small subunit (R2). Larger multisubunit protein complex are also active, composed of (R1)n(R2)n. May self-assemble (via RIP homotypic interaction motif/RHIM) into homomeric fibrillar amyloid structures. Interacts (via RHIM) with human RIPK1 (via RHIM). Interacts (via RHIM) with human RIPK3 (via RHIM). May interact (via RHIM) with human ZBP1 (via RHIM). Interacts (via C-terminus) with host CASP8.

It is found in the host cell membrane. It localises to the host endosome membrane. The catalysed reaction is a 2'-deoxyribonucleoside 5'-diphosphate + [thioredoxin]-disulfide + H2O = a ribonucleoside 5'-diphosphate + [thioredoxin]-dithiol. In terms of biological role, ribonucleoside-diphosphate reductase holoenzyme that provides the precursors necessary for viral DNA synthesis. Allows virus growth in non-dividing cells, as well as reactivation from latency in infected hosts. Catalyzes the biosynthesis of deoxyribonucleotides from the corresponding ribonucleotides. The N-terminal region confers antiapoptotic activity in differentiated cells such as neurons and is important for viral reactivation to increase neural survivability. Prevents host necroptosis by targeting host RIPK1 and RIPK3, thereby hampering the formation of necroptotic RIPK1-RIPK3 complexes. May form hetero-amyloid structures with host proteins RIPK3 or ZBP1, thereby preventing RIPK3- and ZBP1-mediated necroptosis. In addition, inhibits extrinsic apoptosis by targeting host CASP8. This is Ribonucleoside-diphosphate reductase large subunit from Homo sapiens (Human).